Here is an 89-residue protein sequence, read N- to C-terminus: UPF0213 protein HQ_3675A (89 aa).

The GIY-YIG domain maps to 3 to 78; sequence DYHYVYIVEC…KSYTREKKQQ (76 aa).

Belongs to the UPF0213 family.

The sequence is that of UPF0213 protein HQ_3675A from Haloquadratum walsbyi (strain DSM 16790 / HBSQ001).